The primary structure comprises 207 residues: Cytochrome bo(3) ubiquinol oxidase subunit 3 (207 aa).

At 1–26 (MSSQVMHGAAHGHDHGHDDHHHDSGQ) the chain is on the cytoplasmic side. Residues 27–47 (MTVLGFWLYLMTDCILFASLF) form a helical membrane-spanning segment. Residues 48 to 70 (ATYAVLSGSFAGGPSGHDIFQLD) are Periplasmic-facing. A helical membrane pass occupies residues 71–91 (FVAVETLFLLLSSITFGFAML). Residues 92-99 (KMFDGKKA) lie on the Cytoplasmic side of the membrane. Residues 100-120 (GVLGWLAVTFLFGAGFIAMEI) form a helical membrane-spanning segment. Residues 121–141 (YEFHHLIAEGFGPQRSGFLSG) lie on the Periplasmic side of the membrane. The chain crosses the membrane as a helical span at residues 142–162 (FFALVGTHGLHVTAGLIWMAI). The Cytoplasmic segment spans residues 163 to 185 (MMYQINKHGITPTAKTRMSCLSL). Residues 186-206 (FWHFLDVVWICVFTVVYLLGV) form a helical membrane-spanning segment. Residue L207 is a topological domain, periplasmic.

Belongs to the cytochrome c oxidase subunit 3 family. In terms of assembly, heterooctamer of two A chains, two B chains, two C chains and two D chains.

The protein resides in the cell inner membrane. Its function is as follows. Cytochrome bo(3) ubiquinol terminal oxidase is the component of the aerobic respiratory chain of E.coli that predominates when cells are grown at high aeration. Has proton pump activity across the membrane in addition to electron transfer, pumping 2 protons/electron. The chain is Cytochrome bo(3) ubiquinol oxidase subunit 3 (cyoC) from Pseudomonas putida (Arthrobacter siderocapsulatus).